The following is a 121-amino-acid chain: Ribosome-binding factor A (121 aa).

Belongs to the RbfA family. As to quaternary structure, monomer. Binds 30S ribosomal subunits, but not 50S ribosomal subunits or 70S ribosomes.

The protein resides in the cytoplasm. One of several proteins that assist in the late maturation steps of the functional core of the 30S ribosomal subunit. Associates with free 30S ribosomal subunits (but not with 30S subunits that are part of 70S ribosomes or polysomes). Required for efficient processing of 16S rRNA. May interact with the 5'-terminal helix region of 16S rRNA. In Agathobacter rectalis (strain ATCC 33656 / DSM 3377 / JCM 17463 / KCTC 5835 / VPI 0990) (Eubacterium rectale), this protein is Ribosome-binding factor A.